The sequence spans 234 residues: Sugar fermentation stimulation protein A (234 aa).

A DNA-binding region (H-T-H motif) is located at residues 201 to 220; the sequence is LLSEAQQRGVEILAYKAEIS.

The protein belongs to the SfsA family.

Functionally, binds to DNA non-specifically. Could be a regulatory factor involved in maltose metabolism. The protein is Sugar fermentation stimulation protein A of Shigella boydii serotype 4 (strain Sb227).